The chain runs to 779 residues: Endonuclease MutS2 (779 aa).

Residue 328–335 (GPNTGGKT) participates in ATP binding. The region spanning 704-779 (LDLRGKRYEE…GSGATIVTLG (76 aa)) is the Smr domain.

It belongs to the DNA mismatch repair MutS family. MutS2 subfamily. In terms of assembly, homodimer. Binds to stalled ribosomes, contacting rRNA.

Endonuclease that is involved in the suppression of homologous recombination and thus may have a key role in the control of bacterial genetic diversity. Its function is as follows. Acts as a ribosome collision sensor, splitting the ribosome into its 2 subunits. Detects stalled/collided 70S ribosomes which it binds and splits by an ATP-hydrolysis driven conformational change. Acts upstream of the ribosome quality control system (RQC), a ribosome-associated complex that mediates the extraction of incompletely synthesized nascent chains from stalled ribosomes and their subsequent degradation. Probably generates substrates for RQC. This Streptococcus pyogenes serotype M49 (strain NZ131) protein is Endonuclease MutS2.